The chain runs to 262 residues: MNKFLIIDGLNLVRRIYAAIPNENDMESLKERVTSACTKLLRVHHPSHIAIVWDGDEISWRKQLYPDYKKGRKPMPEPLAQGLRALQEHLATLNIASIYAAAEADDVIATLAVKTAKAQGEAIIVSTDKGFSQLNHPRITQWDHFNQQYLDIAALEQKLGVDRSQFLDLMALAGDSGNKIPGIAGIGPKSAAELLKTFRTLSTLFSSLPNLGAKQAKKLAEGKEMARLSYKLAQLQTDLPLNINLKDFRANSTPHPAPNIEQ.

Asp-105 provides a ligand contact to Mg(2+). One can recognise a 5'-3' exonuclease domain in the interval 164–251 (SQFLDLMALA…NINLKDFRAN (88 aa)). Leu-172, Ala-173, Pro-181, Ile-183, and Ile-186 together coordinate K(+). An interaction with DNA region spans residues 185–190 (GIGPKS).

Belongs to the Xni family. Requires Mg(2+) as cofactor. The cofactor is K(+).

Its function is as follows. Has flap endonuclease activity. During DNA replication, flap endonucleases cleave the 5'-overhanging flap structure that is generated by displacement synthesis when DNA polymerase encounters the 5'-end of a downstream Okazaki fragment. This chain is Flap endonuclease Xni, found in Shewanella sp. (strain W3-18-1).